The following is a 423-amino-acid chain: Adenylosuccinate synthetase (423 aa).

GTP contacts are provided by residues G12–K18 and G40–T42. D13 serves as the catalytic Proton acceptor. Mg(2+) is bound by residues D13 and G40. IMP contacts are provided by residues D13–K16, N38–H41, T129, R143, Q221, T236, and R300. H41 (proton donor) is an active-site residue. S296–R302 provides a ligand contact to substrate. GTP contacts are provided by residues R302, K328–D330, and S408–G410.

Belongs to the adenylosuccinate synthetase family. Homodimer. Mg(2+) is required as a cofactor.

Its subcellular location is the cytoplasm. It catalyses the reaction IMP + L-aspartate + GTP = N(6)-(1,2-dicarboxyethyl)-AMP + GDP + phosphate + 2 H(+). It functions in the pathway purine metabolism; AMP biosynthesis via de novo pathway; AMP from IMP: step 1/2. Its function is as follows. Plays an important role in the de novo pathway of purine nucleotide biosynthesis. Catalyzes the first committed step in the biosynthesis of AMP from IMP. This is Adenylosuccinate synthetase from Bacteroides fragilis (strain ATCC 25285 / DSM 2151 / CCUG 4856 / JCM 11019 / LMG 10263 / NCTC 9343 / Onslow / VPI 2553 / EN-2).